We begin with the raw amino-acid sequence, 108 residues long: UPF0060 membrane protein BLi00854/BL03049 (108 aa).

Helical transmembrane passes span 3–23, 31–51, 60–80, and 86–106; these read IAIG…YLVW, PLWY…IPAF, VYAA…WLVD, and LYDW…LWAP.

Belongs to the UPF0060 family.

It is found in the cell membrane. This Bacillus licheniformis (strain ATCC 14580 / DSM 13 / JCM 2505 / CCUG 7422 / NBRC 12200 / NCIMB 9375 / NCTC 10341 / NRRL NRS-1264 / Gibson 46) protein is UPF0060 membrane protein BLi00854/BL03049.